The sequence spans 154 residues: Cyclin-dependent protein kinase inhibitor SMR14 (154 aa).

The segment at 1 to 111 is disordered; sequence MSKIKIFHLF…RPPRKPKAIP (111 aa). Residues 24 to 37 show a composition bias toward low complexity; the sequence is SLLVPSKSDSLDSS. Basic and acidic residues predominate over residues 74–83; sequence KWECKDEESP.

Probable cyclin-dependent protein kinase (CDK) inhibitor that functions as a repressor of mitosis in the endoreduplication cell cycle. This Arabidopsis thaliana (Mouse-ear cress) protein is Cyclin-dependent protein kinase inhibitor SMR14.